Here is a 102-residue protein sequence, read N- to C-terminus: Large ribosomal subunit protein bL21 (102 aa).

It belongs to the bacterial ribosomal protein bL21 family. As to quaternary structure, part of the 50S ribosomal subunit. Contacts protein L20.

Functionally, this protein binds to 23S rRNA in the presence of protein L20. In Geobacillus sp. (strain WCH70), this protein is Large ribosomal subunit protein bL21.